Reading from the N-terminus, the 286-residue chain is Rhomboid-type serine protease 2 (286 aa).

Helical transmembrane passes span 18 to 38, 66 to 86, 99 to 119, 122 to 142, 164 to 183, and 188 to 210; these read ITQYPALTVGLSVFTFLLLVI, SFYLLFHRGFTHWLLNVVGLF, VFTGVTLNVLAVTAGLQFCIV, LLYPNTQVIGLSGVVFSFMSF, VSIPTLYSPFIFLIVCMVLI, and FWGHLAGISSGYLLALGYIKFLY. S133 serves as the catalytic Nucleophile. The active site involves H191.

The protein belongs to the peptidase S54 family.

It localises to the golgi apparatus membrane. The protein localises to the golgi apparatus. Its subcellular location is the cis-Golgi network membrane. It carries out the reaction Cleaves type-1 transmembrane domains using a catalytic dyad composed of serine and histidine that are contributed by different transmembrane domains.. In terms of biological role, probable rhomboid-type serine protease that catalyzes intramembrane proteolysis. The polypeptide is Rhomboid-type serine protease 2 (RBD2) (Debaryomyces hansenii (strain ATCC 36239 / CBS 767 / BCRC 21394 / JCM 1990 / NBRC 0083 / IGC 2968) (Yeast)).